Here is a 362-residue protein sequence, read N- to C-terminus: tRNA 2-selenouridine synthase (362 aa).

The 124-residue stretch at 14–137 folds into the Rhodanese domain; that stretch reads LANETPIIDV…LRQATIEMTN (124 aa). Cys97 (S-selanylcysteine intermediate) is an active-site residue.

This sequence belongs to the SelU family. In terms of assembly, monomer.

It carries out the reaction 5-methylaminomethyl-2-thiouridine(34) in tRNA + selenophosphate + (2E)-geranyl diphosphate + H2O + H(+) = 5-methylaminomethyl-2-selenouridine(34) in tRNA + (2E)-thiogeraniol + phosphate + diphosphate. The catalysed reaction is 5-methylaminomethyl-2-thiouridine(34) in tRNA + (2E)-geranyl diphosphate = 5-methylaminomethyl-S-(2E)-geranyl-thiouridine(34) in tRNA + diphosphate. The enzyme catalyses 5-methylaminomethyl-S-(2E)-geranyl-thiouridine(34) in tRNA + selenophosphate + H(+) = 5-methylaminomethyl-2-(Se-phospho)selenouridine(34) in tRNA + (2E)-thiogeraniol. It catalyses the reaction 5-methylaminomethyl-2-(Se-phospho)selenouridine(34) in tRNA + H2O = 5-methylaminomethyl-2-selenouridine(34) in tRNA + phosphate. Functionally, involved in the post-transcriptional modification of the uridine at the wobble position (U34) of tRNA(Lys), tRNA(Glu) and tRNA(Gln). Catalyzes the conversion of 2-thiouridine (S2U-RNA) to 2-selenouridine (Se2U-RNA). Acts in a two-step process involving geranylation of 2-thiouridine (S2U) to S-geranyl-2-thiouridine (geS2U) and subsequent selenation of the latter derivative to 2-selenouridine (Se2U) in the tRNA chain. The chain is tRNA 2-selenouridine synthase from Proteus mirabilis (strain HI4320).